The chain runs to 142 residues: Cystatin-8 (142 aa).

The signal sequence occupies residues 1 to 19 (MAKPLWLSLILFIIPVALA). N-linked (GlcNAc...) asparagine glycosylation occurs at asparagine 39. Positions 77–81 (QITDR) match the Secondary area of contact motif. Intrachain disulfides connect cysteine 95-cysteine 105 and cysteine 119-cysteine 139. N-linked (GlcNAc...) asparagine glycosylation occurs at asparagine 100.

Belongs to the cystatin family. In terms of tissue distribution, proximal caput region of the epididymis. Lower expression in the testis. Within the testis it is localized to the elongating spermatids, whereas within the epididymis it is exclusively synthesized by the proximal caput epithelium.

The protein localises to the secreted. Its function is as follows. Performs a specialized role during sperm development and maturation. The sequence is that of Cystatin-8 (Cst8) from Mus musculus (Mouse).